The following is a 77-amino-acid chain: Probable Vpr-like protein (77 aa).

A Nuclear export signal motif is present at residues 34 to 42 (LIRLLQGLL). The short motif at 44-53 (RLRFRKPKSK) is the Nuclear localization signal element.

Its subcellular location is the virion. The protein localises to the host nucleus. Seems to function as a Vpr-like protein, since it mediates host cell cycle arrest in G2 phase. Cell cycle arrest creates a favorable environment for maximizing viral expression and production. This chain is Probable Vpr-like protein, found in Felidae (cat family).